A 270-amino-acid polypeptide reads, in one-letter code: Probable septum site-determining protein MinC (270 aa).

The interval 105 to 129 is disordered; the sequence is DRRAPSSKAADEAPVQQAEPAAPAA. Residues 116-129 show a composition bias toward low complexity; that stretch reads EAPVQQAEPAAPAA.

It belongs to the MinC family. As to quaternary structure, interacts with MinD and FtsZ.

Its function is as follows. Cell division inhibitor that blocks the formation of polar Z ring septums. Rapidly oscillates between the poles of the cell to destabilize FtsZ filaments that have formed before they mature into polar Z rings. Prevents FtsZ polymerization. The chain is Probable septum site-determining protein MinC from Burkholderia mallei (strain NCTC 10247).